The sequence spans 103 residues: Cyanovirin-N homolog (103 aa).

Belongs to the cyanovirin-N family.

In terms of biological role, mannose-binding lectin. This is Cyanovirin-N homolog from Tuber borchii (White truffle).